Here is a 512-residue protein sequence, read N- to C-terminus: Glutathione-binding protein GsiB (512 aa).

Positions 1–26 are cleaved as a signal peptide; that stretch reads MARAVHRSGLVALGIATALMASCAFA.

The protein belongs to the bacterial solute-binding protein 5 family. The complex is composed of two ATP-binding proteins (GsiA), two transmembrane proteins (GsiC and GsiD) and a solute-binding protein (GsiB).

It is found in the periplasm. Its function is as follows. Part of the ABC transporter complex GsiABCD involved in glutathione import. Binds glutathione. This Escherichia coli O1:K1 / APEC protein is Glutathione-binding protein GsiB.